Here is a 307-residue protein sequence, read N- to C-terminus: MEFWGLEVKPGSTVKCEPGYGFVLHLSQAALGESKKSDNALMYVKIDDQKLAIGTLSVDKNPHIQFDLIFDKEFELSHTSKTTSVFFTGYKVEQPFEEDEMDLDSEDEDEELNVPVVKENGKADEKKQKSQEKAVAAPSKSSPDSKKSKDDDDSDEDETDDSDEDETDDSDEGLSSEEGDDDSSDEDDTSDDEEEDTPTPKKPEVGKKRPAESSVLKTPLSDKKAKVATPSSQKTGGKKGAAVHVATPHPAKGKTIVNNDKSVKSPKSAPKSGGSVPCKPCSKSFISETALQAHSRAKMGASESQVQ.

The span at 98–112 (EDEMDLDSEDEDEEL) shows a compositional bias: acidic residues. Positions 98-280 (EDEMDLDSED…KSGGSVPCKP (183 aa)) are disordered. Over residues 119–132 (ENGKADEKKQKSQE) the composition is skewed to basic and acidic residues. Positions 151–197 (DDDSDEDETDDSDEDETDDSDEGLSSEEGDDDSSDEDDTSDDEEEDT) are enriched in acidic residues. The span at 198-211 (PTPKKPEVGKKRPA) shows a compositional bias: basic and acidic residues. Residues 265–277 (SPKSAPKSGGSVP) are compositionally biased toward low complexity. The C2H2-type; degenerate zinc-finger motif lies at 276-299 (VPCKPCSKSFISETALQAHSRAKM).

It belongs to the histone deacetylase HD2 family. As to quaternary structure, multimer. Isolated as a trimer composed of 3 proteins of 39, 42 and 45 kDa, possibly a homotrimer with different phosphorylation status or a heterotrimer with HDT2 and/or HDT3. The N-terminus is blocked. Post-translationally, phosphorylated. Required for enzyme activity.

The protein localises to the nucleus. It localises to the nucleolus. Its activity is regulated as follows. Inhibited by 3-(4-Aroyl-1-methyl-1H-pyrrol-2-yl)-N-hydroxy-2-propenamides. 3-(1-methyl-4-phenylacetyl-1H-pyrrol-2-yl)-N-hydroxy-2-propenamide 1b and 3-[1-methyl-4-(3-phenyl-2-propenoyl)-1H-pyrrol-2-yl]-N-hydroxy-2-propenamide 1c are very potent inhibitors. In terms of biological role, mediates the deacetylation of lysine residues on the N-terminal part of the core histones (H2A, H2B, H3 and H4). Histone deacetylation gives a tag for epigenetic repression and plays an important role in transcriptional regulation, cell cycle progression and developmental events. Able to deacetylate all 4 core histones. The polypeptide is Histone deacetylase HDT1 (HDT1) (Zea mays (Maize)).